A 379-amino-acid chain; its full sequence is tRNA 2-selenouridine synthase (379 aa).

Positions 15–138 (FQQNIPLMDV…ARNYLIKQIE (124 aa)) constitute a Rhodanese domain. The active-site S-selanylcysteine intermediate is Cys-98.

It belongs to the SelU family. As to quaternary structure, monomer.

The catalysed reaction is 5-methylaminomethyl-2-thiouridine(34) in tRNA + selenophosphate + (2E)-geranyl diphosphate + H2O + H(+) = 5-methylaminomethyl-2-selenouridine(34) in tRNA + (2E)-thiogeraniol + phosphate + diphosphate. The enzyme catalyses 5-methylaminomethyl-2-thiouridine(34) in tRNA + (2E)-geranyl diphosphate = 5-methylaminomethyl-S-(2E)-geranyl-thiouridine(34) in tRNA + diphosphate. It catalyses the reaction 5-methylaminomethyl-S-(2E)-geranyl-thiouridine(34) in tRNA + selenophosphate + H(+) = 5-methylaminomethyl-2-(Se-phospho)selenouridine(34) in tRNA + (2E)-thiogeraniol. It carries out the reaction 5-methylaminomethyl-2-(Se-phospho)selenouridine(34) in tRNA + H2O = 5-methylaminomethyl-2-selenouridine(34) in tRNA + phosphate. Functionally, involved in the post-transcriptional modification of the uridine at the wobble position (U34) of tRNA(Lys), tRNA(Glu) and tRNA(Gln). Catalyzes the conversion of 2-thiouridine (S2U-RNA) to 2-selenouridine (Se2U-RNA). Acts in a two-step process involving geranylation of 2-thiouridine (S2U) to S-geranyl-2-thiouridine (geS2U) and subsequent selenation of the latter derivative to 2-selenouridine (Se2U) in the tRNA chain. The polypeptide is tRNA 2-selenouridine synthase (Bdellovibrio bacteriovorus (strain ATCC 15356 / DSM 50701 / NCIMB 9529 / HD100)).